The chain runs to 250 residues: 23S rRNA (guanosine-2'-O-)-methyltransferase RlmB (250 aa).

Residues G198, L218, and L227 each contribute to the S-adenosyl-L-methionine site.

This sequence belongs to the class IV-like SAM-binding methyltransferase superfamily. RNA methyltransferase TrmH family. RlmB subfamily.

It is found in the cytoplasm. The enzyme catalyses guanosine(2251) in 23S rRNA + S-adenosyl-L-methionine = 2'-O-methylguanosine(2251) in 23S rRNA + S-adenosyl-L-homocysteine + H(+). Specifically methylates the ribose of guanosine 2251 in 23S rRNA. The sequence is that of 23S rRNA (guanosine-2'-O-)-methyltransferase RlmB from Pseudomonas syringae pv. tomato (strain ATCC BAA-871 / DC3000).